Here is a 479-residue protein sequence, read N- to C-terminus: Adenylate kinase 8 (479 aa).

Adenylate kinase regions lie at residues 58–258 (PKVV…TYVQ) and 269–471 (PKVL…SGII). Position 67–72 (67–72 (ASGKTT)) interacts with ATP. The NMP 1 stretch occupies residues 87–113 (TKESLLEREFSRLSVEAKSYYQVYKKI). Residues 140 to 143 (GIPE), Q147, and R203 contribute to the AMP site. An LID 1 region spans residues 177 to 206 (GKRIDPVTGEIYHTTFDWPPEPEIQNRLRQ). 278–283 (GSGKRL) is a binding site for ATP. The segment at 298–327 (SCGQLLKEAVAAKSSFGELIQPFFEKRMTV) is NMP 2. AMP contacts are provided by residues 325 to 327 (MTV), 354 to 357 (GFPR), and Q361. The LID 2 stretch occupies residues 391-424 (LRRTDPVTGERFHLMYKPPPTIEVQVRLLQNPKD). R392 provides a ligand contact to ATP.

This sequence belongs to the adenylate kinase family. Interacts with CFAP45 and CFAP52; CFAP45 and AK8 dimerization may create a cavity at the interface of the dimer that can accommodate AMP.

It localises to the cytoplasm. It is found in the cytosol. The protein localises to the cytoskeleton. Its subcellular location is the cilium axoneme. The enzyme catalyses AMP + ATP = 2 ADP. It catalyses the reaction a 2'-deoxyribonucleoside 5'-diphosphate + ATP = a 2'-deoxyribonucleoside 5'-triphosphate + ADP. It carries out the reaction a ribonucleoside 5'-diphosphate + ATP = a ribonucleoside 5'-triphosphate + ADP. Its function is as follows. Nucleoside monophosphate (NMP) kinase that catalyzes the reversible transfer of the terminal phosphate group between nucleoside triphosphates and monophosphates. Has highest activity toward AMP, and weaker activity toward dAMP, CMP and dCMP. Also displays broad nucleoside diphosphate kinase activity. This is Adenylate kinase 8 (Ak8) from Mus musculus (Mouse).